Reading from the N-terminus, the 668-residue chain is E3 ubiquitin-protein ligase RNF139 (668 aa).

An N-acetylalanine modification is found at Ala-2. Helical transmembrane passes span 51–71 (IGLQ…VLIL), 85–105 (AFLL…HIDF), 125–145 (SLWM…VTLL), 154–174 (LMIL…PLHI), 178–198 (VVLM…AVKL), 293–313 (GMSA…LAFI), 323–343 (LGFV…LSGL), 356–376 (MCLL…PVLM), 390–410 (FPVL…SYVL), 420–440 (LFAV…SLTV), and 470–490 (IIEF…MMFE). The RING-type; atypical zinc finger occupies 547-586 (CAICYHEFTTSARITPCNHYFHALCLRKWLYIQDTCPMCH). The interval 602-668 (SNNNGFIAPN…AAAEFNDDTD (67 aa)) is disordered. Over residues 618 to 630 (EALREDAAGSDRE) the composition is skewed to basic and acidic residues. Acidic residues predominate over residues 631-641 (LNEDDSTDCDD). Ser-636 bears the Phosphoserine mark. 2 positions are modified to phosphothreonine: Thr-637 and Thr-667.

In terms of assembly, interacts with VHL. Interacts with MHC class I and HM13. Component of SCAP-SREBP complex composed of SREBF2, SCAP and RNF139; the complex hampers the interaction between SCAP and SEC24B, thereby reducing SREBF2 proteolytic processing. Interacts with SREBF2 (via C-terminal domain). Interacts with SCAP; the interaction inhibits the interaction of SCAP with SEC24B and hampering the ER to Golgi transport of the SCAP-SREBP complex. Interacts with SEC24B. Interacts with INSIG1 and INSIG2. Interacts with EIF3F and EIF3H; the interaction leads to protein translation inhibitions in a ubiquitination-dependent manner. Interacts with XBP1 isoform 1; the interaction induces ubiquitination and degradation of XBP1 isoform 1. Interacts with AUP1, AMFR and UBE2G2; interaction with AUP1 facilitates interaction of RNF139 with ubiquitin-conjugating enzyme UBE2G2 and ubiquitin ligase AMFR/gp78, leading to sterol-induced ubiquitination of HMGCR and its subsequent proteasomal degradation. In terms of processing, autoubiquitinated. Ubiquitination is induced by sterol and leads to ist degradation via the ubiquitin-proteasome pathway.

The protein localises to the endoplasmic reticulum membrane. It catalyses the reaction S-ubiquitinyl-[E2 ubiquitin-conjugating enzyme]-L-cysteine + [acceptor protein]-L-lysine = [E2 ubiquitin-conjugating enzyme]-L-cysteine + N(6)-ubiquitinyl-[acceptor protein]-L-lysine.. It functions in the pathway protein modification; protein ubiquitination. In terms of biological role, E3-ubiquitin ligase; acts as a negative regulator of cell proliferation through mechanisms involving G2/M arrest and cell death. Required for MHC class I ubiquitination in cells expressing the cytomegalovirus protein US2 before dislocation from the endoplasmic reticulum (ER). Affects SREBP processing by hindering the SREBP-SCAP complex translocation from the ER to the Golgi, thereby reducing SREBF2 target gene expression. Involved in the sterol-accelerated degradation of HMGCR. This is achieved through binding to INSIG1 and/or INSIG2 at the ER membrane. In addition, interaction of RNF139 with AUP1 facilitates interaction of RNF139 with ubiquitin-conjugating enzyme UBE2G2 and ubiquitin ligase AMFR, leading to ubiquitination of HMGCR. The ubiquitinated HMGCR is then released from the ER by the complex into the cytosol for subsequent destruction. Required for INSIG1 ubiquitination. May be required for EIF3 complex ubiquitination. The chain is E3 ubiquitin-protein ligase RNF139 from Mus musculus (Mouse).